A 2364-amino-acid chain; its full sequence is Cytotoxin-L (2364 aa).

The segment at M1 to L91 is four-helical bundle. One can recognise a GT44 domain in the interval K96–L468. Residues K96–L468 are glucosyltransferase region. UDP-alpha-D-glucose is bound by residues I101–I103, N139, L265–D270, and D286–D288. Mg(2+) contacts are provided by D288, E515, and S518. S518–W520 is a binding site for UDP-alpha-D-glucose. Residues G544–T799 form an autoprocessing region region. Positions 545 and 546 each coordinate Zn(2+). The Peptidase C80 domain maps to L567 to S774. Positions 577, 600, and 647 each coordinate 1D-myo-inositol hexakisphosphate. Residue H653 coordinates Zn(2+). H653 (for protease activity) is an active-site residue. The active-site Nucleophile; for protease activity is C698. H757 serves as a coordination point for Zn(2+). K764, K775, and K792 together coordinate 1D-myo-inositol hexakisphosphate. The segment at L800–P1500 is translocation region. Interaction with host SEMA6A and SEMA6B stretches follow at residues C1433–E1438, D1466–Y1471, F1484–R1495, N1504–K1511, and Y1596–P1601. 20 Cell wall-binding repeats span residues E1813–M1832, V1833–N1852, I1854–G1873, S1876–L1895, F1926–A1945, A1946–E1965, L1967–M1986, Q1987–M2006, Q2007–R2026, Y2057–A2076, V2077–E2097, C2099–R2118, Q2119–I2138, E2139–V2158, E2209–P2224, K2227–M2249, R2250–M2269, Q2270–M2289, Y2320–A2339, and A2340–E2359. Residues G1835–E2364 form a receptor-binding (CROPS) region region.

This sequence belongs to the clostridial glucosylating toxin (LCGT) family. As to quaternary structure, homomultimer; forms an inactive homomultimer at pH 8, which dissociates at pH 4, leading to cytotoxicity. Interacts with host SEMA6A; interaction promotes toxin entry into host cell. Interacts with host SEMA6B; interaction promotes toxin entry into host cell. Requires Zn(2+) as cofactor. Mn(2+) serves as cofactor. It depends on Mg(2+) as a cofactor. In terms of processing, undergoes autocatalytic cleavage to release the N-terminal part (Glucosyltransferase TcsL), which constitutes the active part of the toxin, in the host cytosol. 1D-myo-inositol hexakisphosphate-binding (InsP6) activates the peptidase C80 domain and promotes autoprocessing.

The protein resides in the secreted. Its subcellular location is the host endosome membrane. It localises to the host cytoplasm. The protein localises to the host cytosol. It is found in the host cell membrane. The catalysed reaction is L-threonyl-[protein] + UDP-alpha-D-glucose = 3-O-(alpha-D-glucosyl)-L-threonyl-[protein] + UDP + H(+). With respect to regulation, protease activity is activated upon binding to 1D-myo-inositol hexakisphosphate (InsP6), which induces conformational reorganization. In terms of biological role, precursor of a cytotoxin that targets the vascular endothelium, inducing an anti-inflammatory effect and resulting in lethal toxic shock syndrome. TcsL constitutes the main toxin that mediates the pathology of P.sordellii infection, an anaerobic Gram-positive bacterium found in soil and in the gastrointestinal and vaginal tracts of animals and humans; although the majority of carriers are asymptomatic, pathogenic P.sordellii infections arise rapidly and are highly lethal. This form constitutes the precursor of the toxin: it enters into host cells and mediates autoprocessing to release the active toxin (Glucosyltransferase TcsL) into the host cytosol. Targets vascular endothelium by binding to the semaphorin proteins SEMA6A and SEMA6B, and enters host cells via clathrin-mediated endocytosis. Once entered into host cells, acidification in the endosome promotes the membrane insertion of the translocation region and formation of a pore, leading to translocation of the GT44 and peptidase C80 domains across the endosomal membrane. This activates the peptidase C80 domain and autocatalytic processing, releasing the N-terminal part (Glucosyltransferase TcsL), which constitutes the active part of the toxin, in the cytosol. Its function is as follows. Active form of the toxin, which is released into the host cytosol following autoprocessing and inactivates small GTPases. Acts by mediating monoglucosylation of small GTPases of the Ras (H-Ras/HRAS, K-Ras/KRAS, N-Ras/NRAS and Ral/RALA) family in host cells at the conserved threonine residue located in the switch I region ('Thr-37/35'), using UDP-alpha-D-glucose as the sugar donor. Also able to catalyze monoglucosylation of some members of the Rho family (Rac1 and Rap2A), but with less efficiency than with Ras proteins. Monoglucosylation of host small GTPases completely prevents the recognition of the downstream effector, blocking the GTPases in their inactive form and leading to apoptosis. Induces an anti-inflammatory effect, mainly by inactivating Ras proteins which results in blockage of the cell cycle and killing of immune cells. The absence or moderate local inflammatory response allows C.sordellii spreading in deep tissues, production of toxin which is released in the general circulation and causes a toxic shock syndrome. This Paraclostridium sordellii (Clostridium sordellii) protein is Cytotoxin-L.